We begin with the raw amino-acid sequence, 211 residues long: Methylthioribulose-1-phosphate dehydratase (211 aa).

Positions 94 and 96 each coordinate Zn(2+).

Belongs to the aldolase class II family. MtnB subfamily. Zn(2+) serves as cofactor.

The catalysed reaction is 5-(methylsulfanyl)-D-ribulose 1-phosphate = 5-methylsulfanyl-2,3-dioxopentyl phosphate + H2O. The protein operates within amino-acid biosynthesis; L-methionine biosynthesis via salvage pathway; L-methionine from S-methyl-5-thio-alpha-D-ribose 1-phosphate: step 2/6. Its function is as follows. Catalyzes the dehydration of methylthioribulose-1-phosphate (MTRu-1-P) into 2,3-diketo-5-methylthiopentyl-1-phosphate (DK-MTP-1-P). This Pseudoalteromonas translucida (strain TAC 125) protein is Methylthioribulose-1-phosphate dehydratase.